Reading from the N-terminus, the 155-residue chain is MSQVILDLQLACEDNSGLPEESQFQTWLNAVIPQFQEESEVTIRVVDTAESHCLNLTYRGKDKPTNVLSFPFEVPPGMEMSLLGDLIICRQVVEKEAQEQGKPLEAHWAHMVVHGSLHLLGYDHIEDDEAEEMEAIETEIMLALGYEDPYIAEKE.

Zn(2+) is bound by residues His-114, His-118, and His-124.

Belongs to the endoribonuclease YbeY family. The cofactor is Zn(2+).

It is found in the cytoplasm. Its function is as follows. Single strand-specific metallo-endoribonuclease involved in late-stage 70S ribosome quality control and in maturation of the 3' terminus of the 16S rRNA. This chain is Endoribonuclease YbeY, found in Escherichia coli O81 (strain ED1a).